The following is a 278-amino-acid chain: UPF0276 protein Swit_4400 (278 aa).

The protein belongs to the UPF0276 family.

This Rhizorhabdus wittichii (strain DSM 6014 / CCUG 31198 / JCM 15750 / NBRC 105917 / EY 4224 / RW1) (Sphingomonas wittichii) protein is UPF0276 protein Swit_4400.